The following is a 355-amino-acid chain: MEAKNKKAVASRLCCLCNLRRPVLKRPKTLQQICRECFYEVFEEEIHQVIVQNRLFKSGERVAIGASGGKDSTVLAYVLSELNRRHNYGLDLFLLSIDEGITGYRDDSLETVKRNEVQYGLPLKIVSYKDLYGWTMDEIVKMIGLKNNCTFCGVFRRQALDRGAALLKVEKLVTGHNADDIAETVLLNILRGDIARLSRCTSITTGEDGPIPRCKPFKYTYEKEIVMYAYFKKLDYFSTECIYSPNAYRGFAREFIKDLERIRPRAILDIIKSGEDFRIATTTKMPEQGTCERCGYISSQKWCKACVLLEGLNRGLPKMGIGRPRGVNGDHNKETKKPGSVAKSIESKQCGSLDF.

Residues 320–341 (GIGRPRGVNGDHNKETKKPGSV) are disordered. Positions 328–337 (NGDHNKETKK) are enriched in basic and acidic residues.

It belongs to the TtcA family. CTU1/NCS6/ATPBD3 subfamily.

The protein localises to the cytoplasm. Its pathway is tRNA modification; 5-methoxycarbonylmethyl-2-thiouridine-tRNA biosynthesis. In terms of biological role, plays a central role in 2-thiolation of mcm(5)S(2)U at tRNA wobble positions of tRNA(Lys), tRNA(Glu) and tRNA(Gln). Directly binds tRNAs and probably acts by catalyzing adenylation of tRNAs, an intermediate required for 2-thiolation. It is unclear whether it acts as a sulfurtransferase that transfers sulfur from thiocarboxylated URM1 onto the uridine of tRNAs at wobble position. This Arabidopsis thaliana (Mouse-ear cress) protein is Cytoplasmic tRNA 2-thiolation protein 1.